Consider the following 137-residue polypeptide: Nucleoside diphosphate kinase (137 aa).

ATP-binding residues include K10, F58, R86, T92, R103, and N113. The active-site Pros-phosphohistidine intermediate is the H116.

This sequence belongs to the NDK family. In terms of assembly, homotetramer. Requires Mg(2+) as cofactor.

The protein localises to the cytoplasm. It catalyses the reaction a 2'-deoxyribonucleoside 5'-diphosphate + ATP = a 2'-deoxyribonucleoside 5'-triphosphate + ADP. The enzyme catalyses a ribonucleoside 5'-diphosphate + ATP = a ribonucleoside 5'-triphosphate + ADP. Major role in the synthesis of nucleoside triphosphates other than ATP. The ATP gamma phosphate is transferred to the NDP beta phosphate via a ping-pong mechanism, using a phosphorylated active-site intermediate. This Helicobacter acinonychis (strain Sheeba) protein is Nucleoside diphosphate kinase.